Here is a 444-residue protein sequence, read N- to C-terminus: 23S rRNA (uracil(1939)-C(5))-methyltransferase RlmD (444 aa).

Positions 5 to 67 (RNRLDRTPFQ…RHFDEAKTVE (63 aa)) constitute a TRAM domain. Positions 80, 86, 89, and 168 each coordinate [4Fe-4S] cluster. S-adenosyl-L-methionine contacts are provided by Q276, F305, N310, E326, D353, and D374. C400 acts as the Nucleophile in catalysis.

The protein belongs to the class I-like SAM-binding methyltransferase superfamily. RNA M5U methyltransferase family. RlmD subfamily.

The enzyme catalyses uridine(1939) in 23S rRNA + S-adenosyl-L-methionine = 5-methyluridine(1939) in 23S rRNA + S-adenosyl-L-homocysteine + H(+). Functionally, catalyzes the formation of 5-methyl-uridine at position 1939 (m5U1939) in 23S rRNA. In Xanthomonas euvesicatoria pv. vesicatoria (strain 85-10) (Xanthomonas campestris pv. vesicatoria), this protein is 23S rRNA (uracil(1939)-C(5))-methyltransferase RlmD.